Reading from the N-terminus, the 233-residue chain is Ras-related protein RabV (233 aa).

Position 15 to 22 (glycine 15 to serine 22) interacts with GTP. The Effector region signature appears at tyrosine 37–phenylalanine 45. GTP-binding positions include aspartate 63–histidine 67 and threonine 122–aspartate 125. Residues glutamine 143 to glutamine 182 form a disordered region. Residues asparagine 144–asparagine 180 are compositionally biased toward low complexity.

The protein belongs to the small GTPase superfamily. Rab family.

The protein is Ras-related protein RabV (rabV) of Dictyostelium discoideum (Social amoeba).